Consider the following 134-residue polypeptide: Large ribosomal subunit protein uL18 (134 aa).

The protein belongs to the universal ribosomal protein uL18 family. As to quaternary structure, part of the 50S ribosomal subunit; part of the 5S rRNA/L5/L18/L25 subcomplex. Contacts the 5S and 23S rRNAs.

Functionally, this is one of the proteins that bind and probably mediate the attachment of the 5S RNA into the large ribosomal subunit, where it forms part of the central protuberance. The protein is Large ribosomal subunit protein uL18 of Corynebacterium efficiens (strain DSM 44549 / YS-314 / AJ 12310 / JCM 11189 / NBRC 100395).